Consider the following 290-residue polypeptide: Enoyl-CoA hydratase, mitochondrial (290 aa).

The N-terminal 27 residues, 1-27 (MAALRVLLSCVRGPLRPPVRCPAWRPF), are a transit peptide targeting the mitochondrion. T46 is subject to Phosphothreonine. 98-101 (ADIK) is a binding site for substrate. An N6-acetyllysine; alternate modification is found at K101. An N6-succinyllysine; alternate modification is found at K101. The residue at position 114 (S114) is a Phosphoserine. K115 is subject to N6-acetyllysine; alternate. K115 carries the post-translational modification N6-succinyllysine; alternate. K118 carries the N6-acetyllysine modification. Position 141 (G141) interacts with substrate. K204 bears the N6-succinyllysine mark. K211 bears the N6-acetyllysine mark.

This sequence belongs to the enoyl-CoA hydratase/isomerase family. Homohexamer; dimer of trimers. As to expression, liver, fibroblast, muscle. Barely detectable in spleen and kidney.

The protein resides in the mitochondrion matrix. It carries out the reaction a (3S)-3-hydroxyacyl-CoA = a (2E)-enoyl-CoA + H2O. The catalysed reaction is a (3E)-enoyl-CoA = a 4-saturated (2E)-enoyl-CoA. The enzyme catalyses (3E)-hexenoyl-CoA = (2E)-hexenoyl-CoA. It catalyses the reaction (3S)-3-hydroxybutanoyl-CoA = (2E)-butenoyl-CoA + H2O. It carries out the reaction 3-hydroxyisovaleryl-CoA = 3-methylbut-2-enoyl-CoA + H2O. The catalysed reaction is 3-hydroxypropanoyl-CoA = acryloyl-CoA + H2O. The enzyme catalyses 3-hydroxybutanoyl-CoA = (2E)-butenoyl-CoA + H2O. It catalyses the reaction 2-methylpropenoyl-CoA + H2O = (S)-3-hydroxyisobutanoyl-CoA. It carries out the reaction (3S)-hydroxyhexanoyl-CoA = (2E)-hexenoyl-CoA + H2O. The catalysed reaction is (3S)-hydroxydecanoyl-CoA = (2E)-decenoyl-CoA + H2O. It functions in the pathway lipid metabolism; fatty acid beta-oxidation. Converts unsaturated trans-2-enoyl-CoA species ((2E)-enoyl-CoA) to the corresponding (3S)-3hydroxyacyl-CoA species through addition of a water molecule to the double bond. Catalyzes the hydration of medium- and short-chained fatty enoyl-CoA thioesters from 4 carbons long (C4) up to C16. Has high substrate specificity for crotonyl-CoA ((2E)-butenoyl-CoA) and moderate specificity for acryloyl-CoA, 3-methylcrotonyl-CoA (3-methyl-(2E)-butenoyl-CoA) and methacrylyl-CoA ((2E)-2-methylpropenoyl-CoA). Can bind tiglyl-CoA (2-methylcrotonoyl-CoA), but hydrates only a small amount of this substrate. Plays a key role in the beta-oxidation spiral of short- and medium-chain fatty acid oxidation. At a lower rate than the hydratase reaction, catalyzes the isomerase reaction of trans-3-enoyl-CoA species (such as (3E)-hexenoyl-CoA) to trans-2-enoyl-CoA species (such as (2E)-hexenoyl-CoA), which are subsequently hydrated to 3(S)-3-hydroxyacyl-CoA species (such as (3S)-hydroxyhexanoyl-CoA). In Homo sapiens (Human), this protein is Enoyl-CoA hydratase, mitochondrial.